The chain runs to 226 residues: HTH-type transcriptional regulator TcmR (226 aa).

Positions 1-16 (MDSAETDTPSTRSTPN) are enriched in polar residues. The disordered stretch occupies residues 1–25 (MDSAETDTPSTRSTPNGPGLRQRKL). In terms of domain architecture, HTH tetR-type spans 26–86 (RRTRDQLIRE…TPISAIDEAF (61 aa)). A DNA-binding region (H-T-H motif) is located at residues 49 to 68 (TVEQIAEAVEVHPRTFFRHF).

The protein operates within antibiotic biosynthesis; tetracenomycin C biosynthesis. Its function is as follows. Represses transcription of the divergently oriented tcmR and tcmA (tetracenomycin C resistance and export) genes by binding to an intergenic operator region. This binding is inhibited by tetracenomycin C. This Streptomyces glaucescens protein is HTH-type transcriptional regulator TcmR (tcmR).